The chain runs to 193 residues: Ion-translocating oxidoreductase complex subunit A (193 aa).

Helical transmembrane passes span 5–25 (ALLF…FLGL), 39–59 (IGMG…SWLI), 62–82 (FILV…LVLA), 102–122 (LLGI…VVLL), 134–154 (TIYG…FAAI), and 171–191 (SIAL…TGLV).

Belongs to the NqrDE/RnfAE family. The complex is composed of six subunits: RnfA, RnfB, RnfC, RnfD, RnfE and RnfG.

Its subcellular location is the cell inner membrane. Its function is as follows. Part of a membrane-bound complex that couples electron transfer with translocation of ions across the membrane. This is Ion-translocating oxidoreductase complex subunit A from Pectobacterium atrosepticum (strain SCRI 1043 / ATCC BAA-672) (Erwinia carotovora subsp. atroseptica).